The sequence spans 55 residues: Large ribosomal subunit protein bL33 (55 aa).

The protein belongs to the bacterial ribosomal protein bL33 family.

The polypeptide is Large ribosomal subunit protein bL33 (Burkholderia ambifaria (strain MC40-6)).